The following is a 300-amino-acid chain: Ribosomal protein L11 methyltransferase (300 aa).

Positions 152, 173, 195, and 234 each coordinate S-adenosyl-L-methionine.

The protein belongs to the methyltransferase superfamily. PrmA family.

The protein localises to the cytoplasm. It carries out the reaction L-lysyl-[protein] + 3 S-adenosyl-L-methionine = N(6),N(6),N(6)-trimethyl-L-lysyl-[protein] + 3 S-adenosyl-L-homocysteine + 3 H(+). In terms of biological role, methylates ribosomal protein L11. The chain is Ribosomal protein L11 methyltransferase from Paraburkholderia phymatum (strain DSM 17167 / CIP 108236 / LMG 21445 / STM815) (Burkholderia phymatum).